The sequence spans 216 residues: uncharacterized protein (216 aa).

Positions 55–216 (NEDKAEAMSN…NEKEKDVNPK (162 aa)) are disordered. 3 stretches are compositionally biased toward basic and acidic residues: residues 134-152 (LTEK…DNHV), 177-187 (KINDKSDDTLH), and 207-216 (NEKEKDVNPK).

This is an uncharacterized protein from Caenorhabditis elegans.